A 396-amino-acid chain; its full sequence is Subtilisin-like protease 5 (396 aa).

The first 20 residues, 1–20, serve as a signal peptide directing secretion; sequence MTGFFTILSFSLAALSVTNA. Positions 21-116 are excised as a propeptide; the sequence is AQILSVPKGA…VEPDAIISQH (96 aa). In terms of domain architecture, Inhibitor I9 spans 37 to 113; that stretch reads YIVVMKDDTS…VAFVEPDAII (77 aa). A Peptidase S8 domain is found at 125-396; that stretch reads PWGLSRLSNR…SRLLYNGSGR (272 aa). Catalysis depends on charge relay system residues Asp156 and His187. N-linked (GlcNAc...) asparagine glycans are attached at residues Asn230 and Asn248. The Charge relay system role is filled by Ser342. Over residues 376–389 the composition is skewed to polar residues; the sequence is PTIRNPGPDTTSRL. Residues 376–396 form a disordered region; that stretch reads PTIRNPGPDTTSRLLYNGSGR. Asn392 carries an N-linked (GlcNAc...) asparagine glycan.

The protein belongs to the peptidase S8 family.

It localises to the secreted. Its function is as follows. Secreted subtilisin-like serine protease with keratinolytic activity that contributes to pathogenicity. This is Subtilisin-like protease 5 (SUB5) from Arthroderma benhamiae (strain ATCC MYA-4681 / CBS 112371) (Trichophyton mentagrophytes).